A 540-amino-acid polypeptide reads, in one-letter code: 2-isopropylmalate synthase (540 aa).

Positions 8–269 constitute a Pyruvate carboxyltransferase domain; it reads VLIFDTTLRD…YFNPFFGRAE (262 aa). D17, H208, H210, and N244 together coordinate Mn(2+). The regulatory domain stretch occupies residues 408-540; it reads QLKLVQVSCG…ATPLDASPTL (133 aa).

Belongs to the alpha-IPM synthase/homocitrate synthase family. LeuA type 1 subfamily. In terms of assembly, homodimer. Requires Mn(2+) as cofactor.

It localises to the cytoplasm. The enzyme catalyses 3-methyl-2-oxobutanoate + acetyl-CoA + H2O = (2S)-2-isopropylmalate + CoA + H(+). The protein operates within amino-acid biosynthesis; L-leucine biosynthesis; L-leucine from 3-methyl-2-oxobutanoate: step 1/4. Catalyzes the condensation of the acetyl group of acetyl-CoA with 3-methyl-2-oxobutanoate (2-ketoisovalerate) to form 3-carboxy-3-hydroxy-4-methylpentanoate (2-isopropylmalate). This chain is 2-isopropylmalate synthase, found in Synechococcus sp. (strain WH7803).